Reading from the N-terminus, the 384-residue chain is Anhydro-N-acetylmuramic acid kinase (384 aa).

9-16 (GTSADGVD) serves as a coordination point for ATP.

It belongs to the anhydro-N-acetylmuramic acid kinase family.

It catalyses the reaction 1,6-anhydro-N-acetyl-beta-muramate + ATP + H2O = N-acetyl-D-muramate 6-phosphate + ADP + H(+). The protein operates within amino-sugar metabolism; 1,6-anhydro-N-acetylmuramate degradation. Its pathway is cell wall biogenesis; peptidoglycan recycling. Catalyzes the specific phosphorylation of 1,6-anhydro-N-acetylmuramic acid (anhMurNAc) with the simultaneous cleavage of the 1,6-anhydro ring, generating MurNAc-6-P. Is required for the utilization of anhMurNAc either imported from the medium or derived from its own cell wall murein, and thus plays a role in cell wall recycling. This is Anhydro-N-acetylmuramic acid kinase from Synechococcus sp. (strain CC9311).